The chain runs to 369 residues: Nuclear pore complex-interacting protein family member A7 (369 aa).

The segment at 151–171 (SMKEREHREEERQVSEAEENG) is disordered.

Belongs to the NPIP family.

The protein is Nuclear pore complex-interacting protein family member A7 (NPIPA7) of Homo sapiens (Human).